Here is a 204-residue protein sequence, read N- to C-terminus: dITP/XTP pyrophosphatase (204 aa).

Position 8 to 13 (T8 to K13) interacts with substrate. The Proton acceptor role is filled by D70. Position 70 (D70) interacts with Mg(2+). Residues S71, F153–D156, K176, and H181–R182 each bind substrate.

Belongs to the HAM1 NTPase family. As to quaternary structure, homodimer. It depends on Mg(2+) as a cofactor.

The catalysed reaction is XTP + H2O = XMP + diphosphate + H(+). It catalyses the reaction dITP + H2O = dIMP + diphosphate + H(+). The enzyme catalyses ITP + H2O = IMP + diphosphate + H(+). In terms of biological role, pyrophosphatase that catalyzes the hydrolysis of nucleoside triphosphates to their monophosphate derivatives, with a high preference for the non-canonical purine nucleotides XTP (xanthosine triphosphate), dITP (deoxyinosine triphosphate) and ITP. Seems to function as a house-cleaning enzyme that removes non-canonical purine nucleotides from the nucleotide pool, thus preventing their incorporation into DNA/RNA and avoiding chromosomal lesions. The chain is dITP/XTP pyrophosphatase from Geobacillus kaustophilus (strain HTA426).